Reading from the N-terminus, the 491-residue chain is NADPH:adrenodoxin oxidoreductase, mitochondrial (491 aa).

The N-terminal 32 residues, methionine 1–phenylalanine 32, are a transit peptide targeting the mitochondrion. Residues alanine 49, glutamate 69, leucine 77, and valine 113 each coordinate FAD. Residues glutamine 184–valine 187, arginine 228–arginine 229, and glutamate 240 contribute to the NADP(+) site. Phosphoserine occurs at positions 310 and 317. FAD contacts are provided by residues tryptophan 398 and glycine 405–isoleucine 407. An NADP(+)-binding site is contributed by glycine 405.

It belongs to the ferredoxin--NADP reductase type 1 family. In terms of assembly, monomer. Interacts directly with FDX1. FAD is required as a cofactor.

Its subcellular location is the mitochondrion. It localises to the mitochondrion inner membrane. It catalyses the reaction 2 reduced [adrenodoxin] + NADP(+) + H(+) = 2 oxidized [adrenodoxin] + NADPH. The catalysed reaction is 2 reduced [2Fe-2S]-[ferredoxin] + NADP(+) + H(+) = 2 oxidized [2Fe-2S]-[ferredoxin] + NADPH. Its pathway is steroid metabolism; cholesterol metabolism. Functionally, serves as the first electron transfer protein in all the mitochondrial P450 systems including cholesterol side chain cleavage in all steroidogenic tissues, steroid 11-beta hydroxylation in the adrenal cortex, 25-OH-vitamin D3-24 hydroxylation in the kidney, and sterol C-27 hydroxylation in the liver. Also acts as a ferredoxin--NADP(+) reductase essential for coenzyme Q biosynthesis: together with FDX2, transfers the electrons required for the hydroxylation reaction performed by COQ6. In Homo sapiens (Human), this protein is NADPH:adrenodoxin oxidoreductase, mitochondrial.